The following is a 343-amino-acid chain: Anthranilate phosphoribosyltransferase (343 aa).

Residues Gly86, 89–90 (GD), Thr94, 96–99 (NIST), 114–122 (KHGNRSASG), and Ser126 each bind 5-phospho-alpha-D-ribose 1-diphosphate. Gly86 serves as a coordination point for anthranilate. Ser98 is a Mg(2+) binding site. Asn117 contacts anthranilate. Arg172 lines the anthranilate pocket. Mg(2+) is bound by residues Asp231 and Glu232.

This sequence belongs to the anthranilate phosphoribosyltransferase family. As to quaternary structure, homodimer. Requires Mg(2+) as cofactor.

The enzyme catalyses N-(5-phospho-beta-D-ribosyl)anthranilate + diphosphate = 5-phospho-alpha-D-ribose 1-diphosphate + anthranilate. It functions in the pathway amino-acid biosynthesis; L-tryptophan biosynthesis; L-tryptophan from chorismate: step 2/5. Its function is as follows. Catalyzes the transfer of the phosphoribosyl group of 5-phosphorylribose-1-pyrophosphate (PRPP) to anthranilate to yield N-(5'-phosphoribosyl)-anthranilate (PRA). In Synechococcus sp. (strain JA-2-3B'a(2-13)) (Cyanobacteria bacterium Yellowstone B-Prime), this protein is Anthranilate phosphoribosyltransferase.